The primary structure comprises 227 residues: Arginine ABC transporter permease protein ArtM (227 aa).

One can recognise an ABC transmembrane type-1 domain in the interval 13-209 (IPTSLLLTVV…IITGIATLLL (197 aa)). A run of 5 helical transmembrane segments spans residues 17–37 (LLLTVVSLLIAFFLALFLTFL), 51–71 (LYLTLFTGTPLLVQFFLIYAG), 78–98 (IIDSPLWYVLSNAWFCAALAL), 155–175 (IILVFKGTALASTITIMDIMG), and 188–208 (LTIYGIAGGIYLIITGIATLL).

Belongs to the binding-protein-dependent transport system permease family. HisMQ subfamily. As to quaternary structure, the complex is composed of two ATP-binding proteins (ArtP), two transmembrane proteins (ArtM and ArtQ) and a solute-binding protein (ArtI).

The protein resides in the cell inner membrane. Its function is as follows. Part of the ABC transporter complex ArtPIQM involved in arginine transport. Probably responsible for the translocation of the substrate across the membrane. The protein is Arginine ABC transporter permease protein ArtM (artM) of Haemophilus influenzae (strain ATCC 51907 / DSM 11121 / KW20 / Rd).